The following is a 393-amino-acid chain: Chorismate synthase (393 aa).

Residues R48 and R54 each contribute to the NADP(+) site. FMN contacts are provided by residues 125-127 (RSS), 238-239 (NA), G278, 293-297 (KPTSS), and R319. The tract at residues 355–393 (ACTTPKIPGHTGPREGQEEGPSDSEPKVEFADDPEPDEA) is disordered.

Belongs to the chorismate synthase family. Homotetramer. The cofactor is FMNH2.

The enzyme catalyses 5-O-(1-carboxyvinyl)-3-phosphoshikimate = chorismate + phosphate. It functions in the pathway metabolic intermediate biosynthesis; chorismate biosynthesis; chorismate from D-erythrose 4-phosphate and phosphoenolpyruvate: step 7/7. Its function is as follows. Catalyzes the anti-1,4-elimination of the C-3 phosphate and the C-6 proR hydrogen from 5-enolpyruvylshikimate-3-phosphate (EPSP) to yield chorismate, which is the branch point compound that serves as the starting substrate for the three terminal pathways of aromatic amino acid biosynthesis. This reaction introduces a second double bond into the aromatic ring system. In Nitrosospira multiformis (strain ATCC 25196 / NCIMB 11849 / C 71), this protein is Chorismate synthase.